The following is a 726-amino-acid chain: MAR-binding filament-like protein 1 (726 aa).

The transit peptide at 1 to 41 (MGFLIGGSCFVPSVPLHSRFLSSPSSSSSSSPSSSQFGLLC) directs the protein to the chloroplast. A thylakoid-targeting transit peptide spans 42 to 95 (SSNVAKFKRRRPTLASLNQEDGYEYDVASAKRRAFLLVGISVLPFLQLRSPALA). The Lumenal, thylakoid portion of the chain corresponds to 96-124 (DERGNEIKTSKVDLETEVAVVSEGTSPNP). The chain crosses the membrane as a helical span at residues 125-145 (FLALLNGLGIFSAGVLGALYA). The stretch at 144–691 (YALARQDTKA…KGEILRMRSQ (548 aa)) forms a coiled coil. The Stromal segment spans residues 146-726 (LARQDTKAAE…VRRRKSSTSS (581 aa)). Residues 678–726 (LGSAKGEILRMRSQPDSVKAVNSTDNKEKSDNTVTVKKVVRRRKSSTSS) are disordered. Polar residues predominate over residues 691 to 701 (QPDSVKAVNST). A Nuclear localization signal motif is present at residues 715–722 (KVVRRRKS). Over residues 715–726 (KVVRRRKSSTSS) the composition is skewed to basic residues.

As to quaternary structure, interacts with PTST2; the interaction is essential for the initiation of starch granules biosynthesis in leaf chloroplasts, for the correct location of the process in the stromal spaces between the thylakoid membranes, and for the association of PTST2 with the thylakoid membranes. In terms of processing, predicted to be translocated into the thylakoid by the Tat system. The position of the transit peptide cleavages have not been experimentally proven.

It localises to the plastid. The protein localises to the chloroplast. The protein resides in the chloroplast thylakoid membrane. It is found in the chloroplast stroma. Its subcellular location is the chloroplast nucleoid. It localises to the nucleus. The protein localises to the nucleus matrix. In terms of biological role, DNA-binding protein required for the initiation of starch granules biosynthesis in leaf chloroplasts. Anchored to the thylakoid membranes with its C-terminus facing into the stroma where it is essential for localizing PTST2 and SS4 to the stromal spaces between the thylakoid membranes in order to begin starch granule formation. Associated with leaf chloroplastic nucleoids in vivo. Binds to various chloroplastic double-stranded DNA fragments without particular sequence specificity in vitro. May function at the interface between nucleoids and thylakoids possibly by anchoring nucleoids to the thylakoid membrane system in mature chloroplasts. Likely to participate in nuclear architecture by connecting chromatin with the nuclear matrix and potentially with the nuclear envelope. This is MAR-binding filament-like protein 1 from Arabidopsis thaliana (Mouse-ear cress).